Consider the following 149-residue polypeptide: Sec-independent protein translocase protein TatB (149 aa).

A helical membrane pass occupies residues 1–22 (MFDGIGFMELLLIGVLGLIVLG). The segment covering 86 to 113 (LKQAAQSVNRPYQVQDTPSAQDNQIHNP) has biased composition (polar residues). The segment at 86–149 (LKQAAQSVNR…DPRSNTKANG (64 aa)) is disordered. The segment covering 114–135 (ASQTVSTEASSTSASSAPKSES) has biased composition (low complexity).

Belongs to the TatB family. As to quaternary structure, the Tat system comprises two distinct complexes: a TatABC complex, containing multiple copies of TatA, TatB and TatC subunits, and a separate TatA complex, containing only TatA subunits. Substrates initially bind to the TatABC complex, which probably triggers association of the separate TatA complex to form the active translocon.

The protein resides in the cell inner membrane. Its function is as follows. Part of the twin-arginine translocation (Tat) system that transports large folded proteins containing a characteristic twin-arginine motif in their signal peptide across membranes. Together with TatC, TatB is part of a receptor directly interacting with Tat signal peptides. TatB may form an oligomeric binding site that transiently accommodates folded Tat precursor proteins before their translocation. This chain is Sec-independent protein translocase protein TatB, found in Shewanella oneidensis (strain ATCC 700550 / JCM 31522 / CIP 106686 / LMG 19005 / NCIMB 14063 / MR-1).